The primary structure comprises 59 residues: MTTELDPRLLSLLVCPVTKGPLTYDRETQELISPRAKLAFPIRDGIPIMLPEEARQIDA.

It belongs to the UPF0434 family.

This Gluconobacter oxydans (strain 621H) (Gluconobacter suboxydans) protein is UPF0434 protein GOX0764.